Consider the following 292-residue polypeptide: Elongation factor Ts (292 aa).

An involved in Mg(2+) ion dislocation from EF-Tu region spans residues 79–82 (TDFV).

This sequence belongs to the EF-Ts family.

The protein localises to the cytoplasm. Its function is as follows. Associates with the EF-Tu.GDP complex and induces the exchange of GDP to GTP. It remains bound to the aminoacyl-tRNA.EF-Tu.GTP complex up to the GTP hydrolysis stage on the ribosome. This chain is Elongation factor Ts, found in Malacoplasma penetrans (strain HF-2) (Mycoplasma penetrans).